A 109-amino-acid polypeptide reads, in one-letter code: Small ribosomal subunit protein uS17 (109 aa).

Belongs to the universal ribosomal protein uS17 family. Part of the 30S ribosomal subunit.

Functionally, one of the primary rRNA binding proteins, it binds specifically to the 5'-end of 16S ribosomal RNA. The sequence is that of Small ribosomal subunit protein uS17 from Methanosarcina mazei (strain ATCC BAA-159 / DSM 3647 / Goe1 / Go1 / JCM 11833 / OCM 88) (Methanosarcina frisia).